Consider the following 33-residue polypeptide: Fatty acid-binding protein, intestinal (33 aa).

The protein belongs to the calycin superfamily. Fatty-acid binding protein (FABP) family. As to expression, intestine.

It is found in the cytoplasm. FABPs are thought to play a role in the intracellular transport of long-chain fatty acids and their acyl-CoA esters. The protein is Fatty acid-binding protein, intestinal (fabp2) of Rhamdia sapo (South American catfish).